Here is a 102-residue protein sequence, read N- to C-terminus: snRNA-activating protein complex subunit 5 (102 aa).

Positions 73 to 82 are enriched in polar residues; the sequence is QTTLKLSTRS. The interval 73–102 is disordered; sequence QTTLKLSTRSPMEEEEEEEEEEEEEEESDS. Acidic residues predominate over residues 85–102; sequence EEEEEEEEEEEEEEESDS.

In terms of assembly, part of the SNAPc complex composed of 5 subunits: SNAPC1, SNAPC2, SNAPC3, SNAPC4 and SNAPC5. SNAPC5 interacts with SNAPC4.

It localises to the nucleus. In terms of biological role, part of the SNAPc complex required for the transcription of both RNA polymerase II and III small-nuclear RNA genes. Binds to the proximal sequence element (PSE), a non-TATA-box basal promoter element common to these 2 types of genes. Recruits TBP and BRF2 to the U6 snRNA TATA box. The sequence is that of snRNA-activating protein complex subunit 5 from Mus musculus (Mouse).